The chain runs to 100 residues: Urease subunit gamma (100 aa).

The protein belongs to the urease gamma subunit family. As to quaternary structure, heterotrimer of UreA (gamma), UreB (beta) and UreC (alpha) subunits. Three heterotrimers associate to form the active enzyme. The apoenzyme interacts with an accessory complex composed of UreD, UreF and UreG, which is required for the assembly of the nickel containing metallocenter of UreC. The UreE protein may also play a direct role as a metallochaperone in nickel transfer to the urease apoprotein.

The protein resides in the cytoplasm. The enzyme catalyses urea + 2 H2O + H(+) = hydrogencarbonate + 2 NH4(+). It participates in nitrogen metabolism; urea degradation; CO(2) and NH(3) from urea (urease route): step 1/1. With respect to regulation, the apoenzyme can be activated in vitro in the presence of nickel ions and carbon dioxide, which promotes carbamylation of 'Lys-217' of the UreC (alpha) subunit. The sequence is that of Urease subunit gamma from Klebsiella aerogenes (Enterobacter aerogenes).